A 91-amino-acid polypeptide reads, in one-letter code: MANKQDLIAEVAAKTGLTKKDSEKAVNAFGEVVTEFLAKGEKVQLIGFGTFETRERAAREGRNPQTGEAIKIAATVVPAFKAGKALKDAVK.

The protein belongs to the bacterial histone-like protein family. As to quaternary structure, homodimer.

Histone-like DNA-binding protein which is capable of wrapping DNA to stabilize it, and thus to prevent its denaturation under extreme environmental conditions. The sequence is that of DNA-binding protein HU (hup) from Lactococcus lactis subsp. lactis (strain IL1403) (Streptococcus lactis).